The chain runs to 231 residues: Eukaryotic translation initiation factor 4E allele Eva1 (231 aa).

Residues 1-20 are compositionally biased toward basic and acidic residues; sequence MAAAEMERTTSFDAAEKLKA. Positions 1 to 34 are disordered; the sequence is MAAAEMERTTSFDAAEKLKAADAGGGEVDDELEE. 2 EIF4G-binding regions span residues 56 to 59 and 66 to 102; these read HPLE and FDNP…NNIH. Residues 74–79, K106, and 124–125 each bind mRNA; these read RQIDWG and WE. C129 and C167 are disulfide-bonded. The interval 150–159 is EIF4G-binding; sequence YTLLAMIGHQ. Residues 174–179 and 219–223 contribute to the mRNA site; these read RVKGEK and KRLDR.

Belongs to the eukaryotic initiation factor 4E family. In terms of assembly, EIF4F is a multi-subunit complex, the composition of which varies with external and internal environmental conditions. It is composed of at least EIF4A, EIF4E and EIF4G. EIF4E is also known to interact with other partners. In higher plants two isoforms of EIF4F have been identified, named isoform EIF4F and isoform EIF(iso)4F. Isoform EIF4F has subunits p220 and p26, whereas isoform EIF(iso)4F has subunits p82 and p28. As to quaternary structure, (Microbial infection) Interacts with potyvirus viral genome-linked protein (VPg); this interaction is possible in susceptible hosts but impaired in resistant plants. Post-translationally, according to the redox status, the Cys-129-Cys-167 disulfide bridge may have a role in regulating protein function by affecting its ability to bind capped mRNA.

The protein localises to the nucleus. It localises to the cytoplasm. Its function is as follows. Component of the protein complex eIF4F, which is involved in the recognition of the mRNA cap, ATP-dependent unwinding of 5'-terminal secondary structure and recruitment of mRNA to the ribosome. Recognizes and binds the 7-methylguanosine-containing mRNA cap during an early step in the initiation of protein synthesis and facilitates ribosome binding by inducing the unwinding of the mRNAs secondary structures. Key component of recessive resistance to potyviruses. Functionally, (Microbial infection) Susceptibility host factor required for viral infection (e.g. Potato virus Y (PVY)) by recruiting viral RNAs to the host ribosomal complex via an interaction with viral genome-linked protein (VPg). Displayed sequence is the allele Eva1 that confers resistance to potato virus Y (PVY) by failing to interact with the viral VPg protein. This Solanum etuberosum (Wild potato) protein is Eukaryotic translation initiation factor 4E allele Eva1.